The primary structure comprises 350 residues: tRNA uridine(34) hydroxylase (350 aa).

A Rhodanese domain is found at 146–240; it reads DDPEAVFVDM…YARRAREQGL (95 aa). Cysteine 200 (cysteine persulfide intermediate) is an active-site residue.

The protein belongs to the TrhO family.

It carries out the reaction uridine(34) in tRNA + AH2 + O2 = 5-hydroxyuridine(34) in tRNA + A + H2O. In terms of biological role, catalyzes oxygen-dependent 5-hydroxyuridine (ho5U) modification at position 34 in tRNAs. The chain is tRNA uridine(34) hydroxylase from Erwinia tasmaniensis (strain DSM 17950 / CFBP 7177 / CIP 109463 / NCPPB 4357 / Et1/99).